Here is a 103-residue protein sequence, read N- to C-terminus: Putative RNA-binding protein RbpB (103 aa).

An RRM domain is found at 2 to 79 (SIYVGNLSYD…RDLKVNKAKP (78 aa)). A compositionally biased stretch (basic and acidic residues) spans 74 to 85 (VNKAKPREDRGG). A disordered region spans residues 74-103 (VNKAKPREDRGGSRGSFGGNRSNNNFRNRY). Residues 92 to 103 (GNRSNNNFRNRY) show a composition bias toward low complexity.

The chain is Putative RNA-binding protein RbpB (rbpB) from Nostoc sp. (strain PCC 7120 / SAG 25.82 / UTEX 2576).